We begin with the raw amino-acid sequence, 345 residues long: Nuclear distribution protein nudE-like 1 (345 aa).

Positions Lys27–Val190 form a coiled coil. Residues Val56–Ser166 are self-association. The interaction with KATNB1 stretch occupies residues Asp64 to Glu189. Residues Tyr114–Ile133 form a required for interaction with PAFAH1B1 region. The interaction with CENPF stretch occupies residues Arg175–Val345. Residues Glu189–Val256 form an interaction with YWHAE region. Positions Thr191 to Val345 are interaction with NEFL. The interval Ala195–Val256 is interaction with KATNA1. The residue at position 215 (Ser215) is a Phosphoserine. The segment at Pro217–Gly240 is disordered. Thr219 bears the Phosphothreonine; by CDK1 and MAPK1 mark. An interaction with DISC1 region spans residues Asn227–Lys278. Position 231 is a phosphoserine (Ser231). Position 242 is a phosphoserine; by CDK1 (Ser242). Thr245 carries the phosphothreonine; by CDK1 and MAPK1 modification. The tract at residues Val256–Val291 is required for localization to the centrosome and interaction with dynein, dynactin, tubulin gamma, PCM1 and PCNT. Residue Cys273 is the site of S-palmitoyl cysteine; by ZDHHC2, ZDHHC3 and ZDHHC7 attachment. The tract at residues Ala316–Val345 is disordered. A compositionally biased stretch (low complexity) spans Leu329–Gly339. A Phosphoserine modification is found at Ser344.

The protein belongs to the nudE family. Self-associates. Interacts with DISC1, dynein, dynactin, tubulin gamma, KATNA1, KATNB1, microtubules, PAFAH1B1, PCM1, PCNT, and YWHAE. Interacts directly with NEFL and indirectly with NEFH. Interacts (via C-terminus) with CENPF. Interacts with ZNF365. Interacts with PLEKHM1 (via N- and C-terminus). Interacts with GTP-bound RAB9A; the interaction may lead to RAB9A-dynein motor tethering. Phosphorylated in mitosis. Can be phosphorylated by CDK1, CDK5 and MAPK1. Phosphorylation by CDK5 promotes interaction with KATNA1 and YWHAE. Post-translationally, palmitoylation at Cys-273 reduces affinity for dynein. Expressed at low levels in heart, hypothalamus, liver, lung, spleen and stomach. Expressed at higher levels in testis and brain. Within the brain, expressed in cerebellum, cerebral stem, cortex and striatum.

The protein localises to the cytoplasm. Its subcellular location is the cytoskeleton. It localises to the microtubule organizing center. The protein resides in the centrosome. It is found in the chromosome. The protein localises to the centromere. Its subcellular location is the kinetochore. It localises to the spindle. Its function is as follows. Required for organization of the cellular microtubule array and microtubule anchoring at the centrosome. May regulate microtubule organization at least in part by targeting the microtubule severing protein KATNA1 to the centrosome. Also positively regulates the activity of the minus-end directed microtubule motor protein dynein. May enhance dynein-mediated microtubule sliding by targeting dynein to the microtubule plus ends. Required for several dynein- and microtubule-dependent processes such as the maintenance of Golgi integrity, the centripetal motion of secretory vesicles and the coupling of the nucleus and centrosome. Also required during brain development for the migration of newly formed neurons from the ventricular/subventricular zone toward the cortical plate. Plays a role, together with DISC1, in the regulation of neurite outgrowth. Required for mitosis in some cell types but appears to be dispensible for mitosis in cortical neuronal progenitors, which instead requires NDE1. Facilitates the polymerization of neurofilaments from the individual subunits NEFH and NEFL. Positively regulates lysosome peripheral distribution and ruffled border formation in osteoclasts. Plays a role, together with DISC1, in the regulation of neurite outgrowth. May act as a RAB9A/B effector that tethers RAB9-associated late endosomes to the dynein motor for their retrograde transport to the trans-Golgi network. The chain is Nuclear distribution protein nudE-like 1 (NDEL1) from Oryctolagus cuniculus (Rabbit).